The following is a 95-amino-acid chain: uncharacterized protein (95 aa).

The tract at residues 1–73 is disordered; it reads MAHFKDDLQT…AQQPSMRTEL (73 aa). 2 stretches are compositionally biased toward polar residues: residues 42–52 and 62–73; these read SNHSPSVQESP and GSAQQPSMRTEL.

This is an uncharacterized protein from Homo sapiens (Human).